Here is a 141-residue protein sequence, read N- to C-terminus: MLISKRRMIHALSYEVILLVIIAIALSFIFDVPLEVTGTLGIVMAVTSVFWNMIFNHFFEKFERKHQLERTVKIRILHAIGFEGGLMLVTIPMVAYAMNMSLWQAIVLDFGLTMCILVYTFIFQWCYDTIEKRLGYTPRHS.

Helical transmembrane passes span 16–36, 39–59, 76–96, and 103–123; these read VILLVIIAIALSFIFDVPLEV, TLGIVMAVTSVFWNMIFNHFF, ILHAIGFEGGLMLVTIPMVAY, and WQAIVLDFGLTMCILVYTFIF.

The protein belongs to the proteobacterial antimicrobial compound efflux (PACE) (TC 2.A.117) family.

The protein localises to the cell inner membrane. Functionally, mediates the efflux of short-chain diamines when energized by an electrochemical gradient. Involved in resistance to the synthetic biocide chlorhexidine, a widely used antiseptic and disinfectant in both hospital and community settings. Interacts directly with chlorhexidine and mediates its efflux via an energy-dependent mechanism. This Acinetobacter baylyi (strain ATCC 33305 / BD413 / ADP1) protein is Short-chain diamines transporter.